The sequence spans 192 residues: FMN-dependent NADH:quinone oxidoreductase 1 (192 aa).

FMN-binding positions include S9 and 15–17; that span reads SYS.

The protein belongs to the azoreductase type 1 family. As to quaternary structure, homodimer. The cofactor is FMN.

The catalysed reaction is 2 a quinone + NADH + H(+) = 2 a 1,4-benzosemiquinone + NAD(+). It catalyses the reaction N,N-dimethyl-1,4-phenylenediamine + anthranilate + 2 NAD(+) = 2-(4-dimethylaminophenyl)diazenylbenzoate + 2 NADH + 2 H(+). Its function is as follows. Quinone reductase that provides resistance to thiol-specific stress caused by electrophilic quinones. Also exhibits azoreductase activity. Catalyzes the reductive cleavage of the azo bond in aromatic azo compounds to the corresponding amines. The protein is FMN-dependent NADH:quinone oxidoreductase 1 of Colwellia psychrerythraea (strain 34H / ATCC BAA-681) (Vibrio psychroerythus).